The following is a 378-amino-acid chain: Chaperone protein DnaJ (378 aa).

Residues 5 to 70 form the J domain; the sequence is DYYEVLGVAK…QKRAAYDQYG (66 aa). The segment at 138 to 216 adopts a CR-type zinc-finger fold; it reads GYDTQIRVPS…CHGSGKVKET (79 aa). Zn(2+)-binding residues include C151, C154, C168, C171, C190, C193, C204, and C207. 4 CXXCXGXG motif repeats span residues 151-158, 168-175, 190-197, and 204-211; these read CEVCHGSG, CPTCHGQG, CPKCHGTG, and CAHCHGSG.

It belongs to the DnaJ family. As to quaternary structure, homodimer. Zn(2+) serves as cofactor.

The protein resides in the cytoplasm. Its function is as follows. Participates actively in the response to hyperosmotic and heat shock by preventing the aggregation of stress-denatured proteins and by disaggregating proteins, also in an autonomous, DnaK-independent fashion. Unfolded proteins bind initially to DnaJ; upon interaction with the DnaJ-bound protein, DnaK hydrolyzes its bound ATP, resulting in the formation of a stable complex. GrpE releases ADP from DnaK; ATP binding to DnaK triggers the release of the substrate protein, thus completing the reaction cycle. Several rounds of ATP-dependent interactions between DnaJ, DnaK and GrpE are required for fully efficient folding. Also involved, together with DnaK and GrpE, in the DNA replication of plasmids through activation of initiation proteins. The chain is Chaperone protein DnaJ from Burkholderia vietnamiensis (strain G4 / LMG 22486) (Burkholderia cepacia (strain R1808)).